Here is a 254-residue protein sequence, read N- to C-terminus: Dihydroorotate dehydrogenase B (NAD(+)), electron transfer subunit (254 aa).

Residues 1 to 99 enclose the FAD-binding FR-type domain; it reads MLQTEMKVIQ…LGPLGKGFDL (99 aa). FAD contacts are provided by residues 50 to 53, 67 to 69, and 74 to 75; these read RPIS, LYR, and GT. Positions 218, 223, 226, and 241 each coordinate [2Fe-2S] cluster.

It belongs to the PyrK family. Heterotetramer of 2 PyrK and 2 PyrD type B subunits. Requires [2Fe-2S] cluster as cofactor. FAD serves as cofactor.

It participates in pyrimidine metabolism; UMP biosynthesis via de novo pathway; orotate from (S)-dihydroorotate (NAD(+) route): step 1/1. Functionally, responsible for channeling the electrons from the oxidation of dihydroorotate from the FMN redox center in the PyrD type B subunit to the ultimate electron acceptor NAD(+). The chain is Dihydroorotate dehydrogenase B (NAD(+)), electron transfer subunit from Listeria innocua serovar 6a (strain ATCC BAA-680 / CLIP 11262).